The chain runs to 117 residues: Small ribosomal subunit protein bS6 (117 aa).

This sequence belongs to the bacterial ribosomal protein bS6 family.

Its function is as follows. Binds together with bS18 to 16S ribosomal RNA. The protein is Small ribosomal subunit protein bS6 of Trichodesmium erythraeum (strain IMS101).